Here is a 361-residue protein sequence, read N- to C-terminus: Molybdenum import ATP-binding protein ModC (361 aa).

In terms of domain architecture, ABC transporter spans 1–235 (MDGLRLRFRR…VDLPLALDDD (235 aa)). 33-40 (GHSGSGKS) is a binding site for ATP. In terms of domain architecture, Mop spans 296–361 (QSSILNRLPV…AQIKSVAVLA (66 aa)).

Belongs to the ABC transporter superfamily. Molybdate importer (TC 3.A.1.8) family. In terms of assembly, the complex is composed of two ATP-binding proteins (ModC), two transmembrane proteins (ModB) and a solute-binding protein (ModA).

The protein localises to the cell inner membrane. The catalysed reaction is molybdate(out) + ATP + H2O = molybdate(in) + ADP + phosphate + H(+). Part of the ABC transporter complex ModABC involved in molybdenum import. Responsible for energy coupling to the transport system. The chain is Molybdenum import ATP-binding protein ModC from Pseudomonas aeruginosa (strain ATCC 15692 / DSM 22644 / CIP 104116 / JCM 14847 / LMG 12228 / 1C / PRS 101 / PAO1).